Here is a 317-residue protein sequence, read N- to C-terminus: SWI/SNF-related matrix-associated actin-dependent regulator of chromatin subfamily E member 1-related (317 aa).

Residues 1–17 show a composition bias toward low complexity; sequence MSHGPKQPGAAAAPAGG. The disordered stretch occupies residues 1 to 71; the sequence is MSHGPKQPGA…RKKILPNGPK (71 aa). Lys-31 participates in a covalent cross-link: Glycyl lysine isopeptide (Lys-Gly) (interchain with G-Cter in SUMO2). Residues 31-52 are compositionally biased toward basic and acidic residues; it reads KQERGEGPRAGEKGSHEEEPVK. The segment covering 53-65 has biased composition (basic residues); the sequence is KRGWPKGKKRKKI. Positions 70 to 138 form a DNA-binding region, HMG box; the sequence is PKAPVTGYVR…QYMKELRAYQ (69 aa). Ser-160 is subject to Phosphoserine. The stretch at 190–257 forms a coiled coil; the sequence is EEFLDQNKAR…LQQQLQAVRQ (68 aa).

As to quaternary structure, component of a BHC histone deacetylase complex that contains HDAC1, HDAC2, HMG20B/BRAF35, KDM1A, RCOR1/CoREST and PHF21A/BHC80. The BHC complex may also contain ZMYM2, ZNF217, ZMYM3, GSE1 and GTF2I. Interacts with the BRCA2 tumor suppressor protein. Interacts with DTNB. Ubiquitously expressed in adult tissues.

Its subcellular location is the nucleus. The protein localises to the chromosome. Its function is as follows. Required for correct progression through G2 phase of the cell cycle and entry into mitosis. Required for RCOR1/CoREST mediated repression of neuronal specific gene promoters. This Homo sapiens (Human) protein is SWI/SNF-related matrix-associated actin-dependent regulator of chromatin subfamily E member 1-related (HMG20B).